The following is a 147-amino-acid chain: Adenylylsulfatase HINT1 (147 aa).

The HIT domain occupies 37–147; it reads IFDKIISKEI…GGRQMNWPPG (111 aa). Positions 131–135 match the Histidine triad motif motif; sequence HIHVH. His-133 serves as the catalytic Tele-AMP-histidine intermediate. Residue His-135 participates in substrate binding.

Its subcellular location is the peroxisome. It is found in the plastid. The protein resides in the chloroplast. The enzyme catalyses adenosine 5'-phosphosulfate + H2O = sulfate + AMP + 2 H(+). Its function is as follows. Possesses adenylylsulfatase activity in vitro. The protein is Adenylylsulfatase HINT1 of Arabidopsis thaliana (Mouse-ear cress).